Consider the following 94-residue polypeptide: Large ribosomal subunit protein bL27 (94 aa).

The propeptide occupies 1–9 (MLELNLQLF). Residues 12–33 (KKGGGSTSNGRDSQAKRLGAKA) form a disordered region.

Belongs to the bacterial ribosomal protein bL27 family. Post-translationally, the N-terminus is cleaved by ribosomal processing cysteine protease Prp.

The protein is Large ribosomal subunit protein bL27 of Lactococcus lactis subsp. cremoris (strain MG1363).